The chain runs to 415 residues: Vascular endothelial growth factor C (415 aa).

Positions 1-31 (MHLLCFLSLACSLLAAALIPSPREAPATVAA) are cleaved as a signal peptide. The propeptide occupies 32 to 107 (FESGLGFSEA…RTGDSVKFAA (76 aa)). 3 disulfides stabilise this stretch: Cys-127-Cys-169, Cys-158-Cys-205, and Cys-162-Cys-207. N-linked (GlcNAc...) asparagine glycans are attached at residues Asn-171, Asn-201, and Asn-236. Residues 224 to 415 (SLPATLPQCQ…PSYWKRPHLN (192 aa)) constitute a propeptide that is removed on maturation. A run of 4 repeats spans residues 276-291 (CGPNKELDEDTCQCVC), 300-315 (CGPHKELDRDSCQCVC), 324-339 (CGANREFDENTCQCVC), and 343-358 (CPRNQPLNPGKCACEC). The interval 276–358 (CGPNKELDED…LNPGKCACEC (83 aa)) is 4 X 16 AA repeats of C-X(10)-C-X-C-X(1,3)-C.

It belongs to the PDGF/VEGF growth factor family. Homodimer; non-covalent and antiparallel. Interacts with FLT4/VEGFR3; the interaction is required for FLT4/VEGFR3 homodimarization and activation. Undergoes a complex proteolytic maturation which generates a variety of processed secreted forms with increased activity toward VEGFR-3, but only the fully processed form could activate VEGFR-2. VEGF-C first form an antiparallel homodimer linked by disulfide bonds. Before secretion, a cleavage occurs between Arg-223 and Ser-224 producing a heterotetramer. The next extracellular step of the processing removes the N-terminal propeptide. Finally the mature VEGF-C is composed mostly of two VEGF homology domains (VHDs) bound by non-covalent interactions. Expressed in adult heart, brain, spleen, lung, liver, skeletal muscle, kidney, testis and intestine with higher levels in heart, brain and kidney. Isoform 4 levels are very low. Isoform 3 is mostly expressed in liver and has reduced expression level in other tissues. Isoform 2 is mostly expressed in brain and kidney, although a lower level expression in other tissues is also detectable.

The protein resides in the secreted. Functionally, growth factor active in angiogenesis, and endothelial cell growth, stimulating their proliferation and migration and also has effects on the permeability of blood vessels. May function in angiogenesis of the venous and lymphatic vascular systems during embryogenesis, and also in the maintenance of differentiated lymphatic endothelium in adults. Binds and activates KDR/VEGFR2 and FLT4/VEGFR3 receptors. The chain is Vascular endothelial growth factor C (Vegfc) from Mus musculus (Mouse).